We begin with the raw amino-acid sequence, 290 residues long: Dual-specificity RNA pseudouridine synthase RluF (290 aa).

The region spanning 7–72 (VRLNKYISES…EAEDLVLIAL (66 aa)) is the S4 RNA-binding domain. 2 interaction with RNA regions span residues 105–108 (RLDK) and 187–190 (RQIR). The Nucleophile role is filled by Asp-107. A disordered region spans residues 241-290 (SEAKPKAKAKPKTAGIKRPVVKMEKTAEKGGRPASNGKRFTSPGRKKKGR). Positions 261–271 (VKMEKTAEKGG) are enriched in basic and acidic residues.

This sequence belongs to the pseudouridine synthase RsuA family. Monomer.

It carries out the reaction uridine(2604) in 23S rRNA = pseudouridine(2604) in 23S rRNA. The enzyme catalyses uridine(35) in tRNA(Tyr) = pseudouridine(35) in tRNA(Tyr). Its function is as follows. Dual specificity enzyme that catalyzes the synthesis of pseudouridine from uracil-2604 in 23S ribosomal RNA and from uracil-35 in the anticodon of tRNA(Tyr). In Escherichia coli O157:H7, this protein is Dual-specificity RNA pseudouridine synthase RluF (rluF).